The chain runs to 429 residues: 3-phosphoshikimate 1-carboxyvinyltransferase (429 aa).

3-phosphoshikimate contacts are provided by Lys23, Ser24, and Arg28. Lys23 serves as a coordination point for phosphoenolpyruvate. Phosphoenolpyruvate is bound by residues Gly95 and Arg123. Residues Ser168, Gln170, Asp316, and Lys343 each contribute to the 3-phosphoshikimate site. Gln170 provides a ligand contact to phosphoenolpyruvate. Catalysis depends on Asp316, which acts as the Proton acceptor. Phosphoenolpyruvate-binding residues include Arg347 and Arg389.

It belongs to the EPSP synthase family. In terms of assembly, monomer.

The protein resides in the cytoplasm. The enzyme catalyses 3-phosphoshikimate + phosphoenolpyruvate = 5-O-(1-carboxyvinyl)-3-phosphoshikimate + phosphate. Its pathway is metabolic intermediate biosynthesis; chorismate biosynthesis; chorismate from D-erythrose 4-phosphate and phosphoenolpyruvate: step 6/7. Catalyzes the transfer of the enolpyruvyl moiety of phosphoenolpyruvate (PEP) to the 5-hydroxyl of shikimate-3-phosphate (S3P) to produce enolpyruvyl shikimate-3-phosphate and inorganic phosphate. The protein is 3-phosphoshikimate 1-carboxyvinyltransferase of Bacillus cereus (strain B4264).